The chain runs to 507 residues: Probable bifunctional methylthioribulose-1-phosphate dehydratase/enolase-phosphatase E1 (507 aa).

N-acetylalanine is present on alanine 2. Residues alanine 2–aspartate 237 form a methylthioribulose-1-phosphate dehydratase region. Cysteine 109 is a binding site for substrate. Residues histidine 127 and histidine 129 each coordinate Zn(2+). Residue glutamate 152 is the Proton donor/acceptor of the active site. Histidine 202 is a Zn(2+) binding site. Residues isoleucine 268 to isoleucine 507 form an enolase-phosphatase E1 region. Mg(2+)-binding residues include aspartate 271 and glutamate 273. Substrate-binding positions include serine 406 to serine 407 and lysine 440. Aspartate 466 contributes to the Mg(2+) binding site.

In the N-terminal section; belongs to the aldolase class II family. MtnB subfamily. The protein in the C-terminal section; belongs to the HAD-like hydrolase superfamily. MasA/MtnC family. Zn(2+) is required as a cofactor. Requires Mg(2+) as cofactor.

The catalysed reaction is 5-(methylsulfanyl)-D-ribulose 1-phosphate = 5-methylsulfanyl-2,3-dioxopentyl phosphate + H2O. It carries out the reaction 5-methylsulfanyl-2,3-dioxopentyl phosphate + H2O = 1,2-dihydroxy-5-(methylsulfanyl)pent-1-en-3-one + phosphate. Its pathway is amino-acid biosynthesis; L-methionine biosynthesis via salvage pathway; L-methionine from S-methyl-5-thio-alpha-D-ribose 1-phosphate: step 2/6. It participates in amino-acid biosynthesis; L-methionine biosynthesis via salvage pathway; L-methionine from S-methyl-5-thio-alpha-D-ribose 1-phosphate: step 3/6. It functions in the pathway amino-acid biosynthesis; L-methionine biosynthesis via salvage pathway; L-methionine from S-methyl-5-thio-alpha-D-ribose 1-phosphate: step 4/6. This Arabidopsis thaliana (Mouse-ear cress) protein is Probable bifunctional methylthioribulose-1-phosphate dehydratase/enolase-phosphatase E1.